Reading from the N-terminus, the 507-residue chain is Fatty acid resistance protein FarB (507 aa).

14 helical membrane passes run 8 to 28 (GAAL…EVLD), 52 to 72 (WVIT…GFLA), 78 to 98 (VKLF…CGIA), 109 to 129 (ILQG…LMAS), 136 to 156 (MLAL…GPIL), 164 to 184 (WHWG…AWIT), 199 to 219 (PTDY…QMML), 233 to 253 (IITL…WELG), 274 to 294 (IATS…PLVL), 303 to 323 (AWAG…SPLI), 334 to 354 (LLVT…TDFY), 363 to 383 (IWPQ…LTTI), 399 to 419 (LSNF…STLW), and 478 to 498 (IFLA…LAKP).

This sequence belongs to the major facilitator superfamily. EmrB family. As to quaternary structure, probably part of a tripartite efflux system FarAB-MtrE, which is composed of an inner membrane transporter, FarB, a periplasmic membrane fusion protein, FarA, and an outer membrane component, MtrE.

It is found in the cell inner membrane. Mediates resistance to long-chained antibacterial fatty acids (FAs). Function is dependent on the MtrE outer membrane protein. This is Fatty acid resistance protein FarB from Neisseria gonorrhoeae.